Here is a 213-residue protein sequence, read N- to C-terminus: Translation initiation factor IF-3 (213 aa).

Residues 178–213 (VKTLIKSEKPEKPEKPEKSEKTEKQGPSTPPAPSAS) form a disordered region. The span at 182-201 (IKSEKPEKPEKPEKSEKTEK) shows a compositional bias: basic and acidic residues.

This sequence belongs to the IF-3 family. Monomer.

It localises to the cytoplasm. In terms of biological role, IF-3 binds to the 30S ribosomal subunit and shifts the equilibrium between 70S ribosomes and their 50S and 30S subunits in favor of the free subunits, thus enhancing the availability of 30S subunits on which protein synthesis initiation begins. The protein is Translation initiation factor IF-3 of Solibacter usitatus (strain Ellin6076).